The sequence spans 112 residues: Large ribosomal subunit protein bL17 (112 aa).

The protein belongs to the bacterial ribosomal protein bL17 family. Part of the 50S ribosomal subunit. Contacts protein L32.

The chain is Large ribosomal subunit protein bL17 from Thermoanaerobacter pseudethanolicus (strain ATCC 33223 / 39E) (Clostridium thermohydrosulfuricum).